Here is a 329-residue protein sequence, read N- to C-terminus: Peroxidase 58 (329 aa).

An N-terminal signal peptide occupies residues 1–23 (MGLSKTIPLVLLPILMFGVLSNA). Intrachain disulfides connect Cys-34/Cys-116, Cys-67/Cys-72, Cys-122/Cys-325, and Cys-201/Cys-234. N-linked (GlcNAc...) asparagine glycosylation is present at Asn-36. Residue His-65 is the Proton acceptor of the active site. Ca(2+) is bound by residues Asp-66, Val-69, Gly-71, Asp-73, and Ser-75. A substrate-binding site is contributed by Pro-164. His-194 is a heme b binding site. Thr-195 serves as a coordination point for Ca(2+). Asn-210 carries N-linked (GlcNAc...) asparagine glycosylation. Residues Asp-247, Ser-250, and Asp-255 each coordinate Ca(2+).

Belongs to the peroxidase family. Classical plant (class III) peroxidase subfamily. The cofactor is heme b. Ca(2+) is required as a cofactor.

It is found in the secreted. It carries out the reaction 2 a phenolic donor + H2O2 = 2 a phenolic radical donor + 2 H2O. In terms of biological role, removal of H(2)O(2), oxidation of toxic reductants, biosynthesis and degradation of lignin, suberization, auxin catabolism, response to environmental stresses such as wounding, pathogen attack and oxidative stress. These functions might be dependent on each isozyme/isoform in each plant tissue. This Arabidopsis thaliana (Mouse-ear cress) protein is Peroxidase 58 (PER58).